The primary structure comprises 156 residues: Small ribosomal subunit protein uS7 (156 aa).

This sequence belongs to the universal ribosomal protein uS7 family. Part of the 30S ribosomal subunit. Contacts proteins S9 and S11.

Its function is as follows. One of the primary rRNA binding proteins, it binds directly to 16S rRNA where it nucleates assembly of the head domain of the 30S subunit. Is located at the subunit interface close to the decoding center, probably blocks exit of the E-site tRNA. This Mycolicibacterium vanbaalenii (strain DSM 7251 / JCM 13017 / BCRC 16820 / KCTC 9966 / NRRL B-24157 / PYR-1) (Mycobacterium vanbaalenii) protein is Small ribosomal subunit protein uS7.